The primary structure comprises 77 residues: Protein RALF-like 17 (77 aa).

Positions 1-29 (MAASREFIICCFLTLLLCNFFMRVESGAA) are cleaved as a signal peptide. The cysteines at positions 37 and 51 are disulfide-linked.

The protein belongs to the plant rapid alkalinization factor (RALF) family.

The protein resides in the secreted. Its function is as follows. Cell signaling peptide that may regulate plant stress, growth, and development. Mediates a rapid alkalinization of extracellular space by mediating a transient increase in the cytoplasmic Ca(2+) concentration leading to a calcium-dependent signaling events through a cell surface receptor and a concomitant activation of some intracellular mitogen-activated protein kinases. This Arabidopsis thaliana (Mouse-ear cress) protein is Protein RALF-like 17 (RALFL17).